The primary structure comprises 458 residues: Argininosuccinate lyase (458 aa).

This sequence belongs to the lyase 1 family. Argininosuccinate lyase subfamily.

The protein resides in the cytoplasm. The enzyme catalyses 2-(N(omega)-L-arginino)succinate = fumarate + L-arginine. It participates in amino-acid biosynthesis; L-arginine biosynthesis; L-arginine from L-ornithine and carbamoyl phosphate: step 3/3. In Salmonella paratyphi A (strain ATCC 9150 / SARB42), this protein is Argininosuccinate lyase.